Consider the following 417-residue polypeptide: NADH-quinone oxidoreductase subunit D (417 aa).

This sequence belongs to the complex I 49 kDa subunit family. NDH-1 is composed of 14 different subunits. Subunits NuoB, C, D, E, F, and G constitute the peripheral sector of the complex.

The protein resides in the cell inner membrane. It carries out the reaction a quinone + NADH + 5 H(+)(in) = a quinol + NAD(+) + 4 H(+)(out). NDH-1 shuttles electrons from NADH, via FMN and iron-sulfur (Fe-S) centers, to quinones in the respiratory chain. The immediate electron acceptor for the enzyme in this species is believed to be ubiquinone. Couples the redox reaction to proton translocation (for every two electrons transferred, four hydrogen ions are translocated across the cytoplasmic membrane), and thus conserves the redox energy in a proton gradient. The protein is NADH-quinone oxidoreductase subunit D of Halorhodospira halophila (strain DSM 244 / SL1) (Ectothiorhodospira halophila (strain DSM 244 / SL1)).